Consider the following 561-residue polypeptide: Putative transport protein Ent638_1362 (561 aa).

The next 5 helical transmembrane spans lie at 8-28, 32-52, 66-86, 94-114, and 158-178; these read LLNGNYILLLFVVLALGLCLG, LGSVQLGNSIGVLVVSLLLGQ, FMLFIFCVGVEAGPNFFSIFF, MLALVMVGSALIIALGLGKLF, and HLSLGYALTYLIGLVSLIVAA. RCK C-terminal domains lie at 202 to 288 and 292 to 373; these read LDTD…SFRN and VFDR…RIGF. The next 5 helical transmembrane spans lie at 383 to 403, 406 to 426, 447 to 467, 475 to 495, and 540 to 560; these read LLAFCAFFIVGLMIGMITFQF, FSFGVGNAAGLLFAGIMLGFL, FGLMVFMAGVGLSAGSGIGHS, MLVAGLIVSLLPVVICFLFGA, and AIANVLLTLAGTLIIIIWPGL.

Belongs to the AAE transporter (TC 2.A.81) family. YbjL subfamily.

The protein resides in the cell membrane. The protein is Putative transport protein Ent638_1362 of Enterobacter sp. (strain 638).